A 154-amino-acid polypeptide reads, in one-letter code: Large ribosomal subunit protein uL22c (154 aa).

This sequence belongs to the universal ribosomal protein uL22 family. As to quaternary structure, part of the 50S ribosomal subunit.

The protein localises to the plastid. Its subcellular location is the chloroplast. Its function is as follows. This protein binds specifically to 23S rRNA. The globular domain of the protein is located near the polypeptide exit tunnel on the outside of the subunit, while an extended beta-hairpin is found that lines the wall of the exit tunnel in the center of the 70S ribosome. The polypeptide is Large ribosomal subunit protein uL22c (rpl22) (Platanus occidentalis (Sycamore)).